The primary structure comprises 229 residues: Growth factor receptor-bound protein 2-A (229 aa).

Positions 1 to 58 (MEAIAKYDFKATADDELSFKRGDVLKVLNEECDQNWYKAELNGKDGFIPKNYIEMKAH) constitute an SH3 1 domain. One can recognise an SH2 domain in the interval 60–152 (WFFGKIPRAK…NQQIFLRDIE (93 aa)). Positions 168 to 227 (QQPTYVQALFDFDPQEDGELGFRRGDFIQVVDNSDPNWWKGTCLSQTGMFPRNYVTPVNR) constitute an SH3 2 domain.

The protein belongs to the GRB2/sem-5/DRK family.

It localises to the nucleus. The protein resides in the cytoplasm. It is found in the endosome. The protein localises to the golgi apparatus. In terms of biological role, adapter protein that provides a critical link between cell surface growth factor receptors and the Ras signaling pathway. Promotes meiotic reinitiation during oocyte maturation. The protein is Growth factor receptor-bound protein 2-A (grb2-a) of Xenopus laevis (African clawed frog).